Reading from the N-terminus, the 1231-residue chain is Cohesin subunit SA-2 (1231 aa).

Met1 bears the N-acetylmethionine mark. The interval 1-75 is disordered; it reads MIAAPEIPTD…GSNRMNGHHQ (75 aa). Positions 36–48 are enriched in basic residues; the sequence is KQGKGKTCKKGKK. Residues 293–378 enclose the SCD domain; the sequence is FVHRYRDAIA…SRFKDRIVSM (86 aa). N6-acetyllysine is present on Lys607. Ser1058, Ser1061, Ser1064, and Ser1065 each carry phosphoserine. The tract at residues 1062–1087 is disordered; sequence GMSSRGSTVRSKKSKPSTGKRKVVEG. A compositionally biased stretch (basic residues) spans 1071–1082; the sequence is RSKKSKPSTGKR. Thr1112 carries the post-translational modification Phosphothreonine. A phosphoserine mark is found at Ser1177 and Ser1178.

The protein belongs to the SCC3 family. In terms of assembly, interacts directly with RAD21 in cohesin complex. Cohesin complexes are composed of a heterodimer between a SMC1 protein (SMC1A or SMC1B) and SMC3, which are attached via their hinge domain, and RAD21 which link them at their heads, and one STAG protein (STAG1, STAG2 or STAG3). In cohesin complexes, STAG2 is mutually exclusive with STAG1 and STAG3. Phosphorylated by PLK1. The large dissociation of cohesin from chromosome arms during prophase is partly due to its phosphorylation.

It localises to the nucleus. It is found in the chromosome. The protein resides in the centromere. In terms of biological role, component of cohesin complex, a complex required for the cohesion of sister chromatids after DNA replication. The cohesin complex apparently forms a large proteinaceous ring within which sister chromatids can be trapped. At anaphase, the complex is cleaved and dissociates from chromatin, allowing sister chromatids to segregate. The cohesin complex may also play a role in spindle pole assembly during mitosis. This Mus musculus (Mouse) protein is Cohesin subunit SA-2 (Stag2).